Reading from the N-terminus, the 400-residue chain is Acetyl-CoA decarbonylase/synthase complex subunit delta (400 aa).

It belongs to the CdhD family. Heterodimer of delta and gamma chains. The ACDS complex is made up of alpha, epsilon, beta, gamma and delta chains with a probable stoichiometry of (alpha(2)epsilon(2))(4)-beta(8)-(gamma(1)delta(1))(8).

Its function is as follows. Part of a complex that catalyzes the reversible cleavage of acetyl-CoA, allowing autotrophic growth from CO(2). Probably maintains the overall quaternary structure of the ACDS complex. The polypeptide is Acetyl-CoA decarbonylase/synthase complex subunit delta (Methanopyrus kandleri (strain AV19 / DSM 6324 / JCM 9639 / NBRC 100938)).